The primary structure comprises 464 residues: NADH-quinone oxidoreductase subunit N 1 (464 aa).

14 helical membrane passes run 6–26 (ILPEAILAIGILTVFILELFL), 33–53 (FLSVLAFIFVVLSGYSIFFVN), 65–85 (VDALNLIGKLFILAVTGFVLL), 98–118 (YGELPYLYLIATLGLMVMISS), 122–142 (AIIFTGLELASITMYILVGLF), 155–175 (YLVIGTTGTSMYALGSALVYA), 192–212 (FALGVILIISALALKVSAVPF), 237–257 (IGMYFLFVKLTMYLFSAFPDW), 259–279 (YVVMLLAVLSMFYGNIVAYAQ), 285–305 (LLAYSSIAHAGYFLTALTAVD), 312–332 (LLFYVFVYALATVGAFTVLAI), 356–376 (LASMLALFLFALIGIPPAAVF), 401–421 (ASLISAGYYLKVIVYMFLYSG), and 436–456 (FTVLGTAFLVIFFGLFPHVVL).

It belongs to the complex I subunit 2 family. NDH-1 is composed of 14 different subunits. Subunits NuoA, H, J, K, L, M, N constitute the membrane sector of the complex.

The protein resides in the cell inner membrane. It catalyses the reaction a quinone + NADH + 5 H(+)(in) = a quinol + NAD(+) + 4 H(+)(out). Functionally, NDH-1 shuttles electrons from NADH, via FMN and iron-sulfur (Fe-S) centers, to quinones in the respiratory chain. The immediate electron acceptor for the enzyme in this species is believed to be ubiquinone. Couples the redox reaction to proton translocation (for every two electrons transferred, four hydrogen ions are translocated across the cytoplasmic membrane), and thus conserves the redox energy in a proton gradient. The chain is NADH-quinone oxidoreductase subunit N 1 from Aquifex aeolicus (strain VF5).